Here is a 177-residue protein sequence, read N- to C-terminus: Large ribosomal subunit protein uL6 (177 aa).

The protein belongs to the universal ribosomal protein uL6 family. Part of the 50S ribosomal subunit.

In terms of biological role, this protein binds to the 23S rRNA, and is important in its secondary structure. It is located near the subunit interface in the base of the L7/L12 stalk, and near the tRNA binding site of the peptidyltransferase center. This Beijerinckia indica subsp. indica (strain ATCC 9039 / DSM 1715 / NCIMB 8712) protein is Large ribosomal subunit protein uL6.